The sequence spans 382 residues: D-galactonate dehydratase (382 aa).

Asp-183 contributes to the Mg(2+) binding site. His-185 serves as the catalytic Proton donor. Positions 209 and 235 each coordinate Mg(2+). The Proton acceptor role is filled by His-285.

This sequence belongs to the mandelate racemase/muconate lactonizing enzyme family. GalD subfamily. Requires Mg(2+) as cofactor.

It catalyses the reaction D-galactonate = 2-dehydro-3-deoxy-D-galactonate + H2O. It participates in carbohydrate acid metabolism; D-galactonate degradation; D-glyceraldehyde 3-phosphate and pyruvate from D-galactonate: step 1/3. Functionally, catalyzes the dehydration of D-galactonate to 2-keto-3-deoxy-D-galactonate. The polypeptide is D-galactonate dehydratase (Salmonella paratyphi A (strain AKU_12601)).